The chain runs to 444 residues: Probable glycolate oxidase iron-sulfur subunit (444 aa).

4Fe-4S ferredoxin-type domains lie at 14 to 46 (FKERMDEGELLNCMRCGFCLPSCPTYIESGFQE) and 69 to 100 (EDVERSLSLCLGCRACEPVCPSGVKYGQLLEE). Cys-26, Cys-29, Cys-32, Cys-36, Cys-78, Cys-81, Cys-84, and Cys-88 together coordinate [4Fe-4S] cluster.

In terms of assembly, the glycolate oxidase likely consists of several subunits including GlcD and GlcF. [4Fe-4S] cluster serves as cofactor.

Its subcellular location is the cell membrane. It carries out the reaction glycolate + A = glyoxylate + AH2. The enzyme catalyses (R)-lactate + A = pyruvate + AH2. In terms of biological role, component of a complex that catalyzes the oxidation of glycolate to glyoxylate. Is also able to oxidize D-lactate ((R)-lactate). Does not link directly to O(2), and 2,6-dichloroindophenol (DCIP) and phenazine methosulfate (PMS) can act as artificial electron acceptors in vitro, but the physiological molecule that functions as primary electron acceptor during glycolate oxidation is unknown. The polypeptide is Probable glycolate oxidase iron-sulfur subunit (glcF) (Bacillus subtilis (strain 168)).